We begin with the raw amino-acid sequence, 454 residues long: Dihydrolipoyllysine-residue succinyltransferase component of 2-oxoglutarate dehydrogenase complex, mitochondrial (454 aa).

The N-terminal 68 residues, 1 to 68, are a transit peptide targeting the mitochondrion; sequence MLSRSRCVSR…RFFQTTAVCK (68 aa). One can recognise a Lipoyl-binding domain in the interval 71-145; sequence VITVQTPAFA…EGGTPLFTLR (75 aa). Position 82 is a phosphoserine (Ser82). The residue at position 111 (Lys111) is an N6-lipoyllysine. Positions 147-227 are disordered; that stretch reads TGAAPAKAKP…KGLRSEHREK (81 aa). Residues 149–163 show a composition bias toward low complexity; the sequence is AAPAKAKPAETPAPA. At Lys155 the chain carries N6-acetyllysine. Pro residues predominate over residues 186–197; that stretch reads PPVPSPSQPPSS. A compositionally biased stretch (low complexity) spans 198–217; that stretch reads KPVSAIKPTAAPPLAEAGAA. Lys268, Lys273, Lys274, Lys278, and Lys308 each carry N6-acetyllysine. Active-site residues include His425 and Asp429.

Belongs to the 2-oxoacid dehydrogenase family. The 2-oxoglutarate dehydrogenase complex is composed of OGDH (2-oxoglutarate dehydrogenase; E1), DLST (dihydrolipoamide succinyltransferase; E2), DLD (dihydrolipoamide dehydrogenase; E3) and the assembly factor KGD4. It contains multiple copies of the three enzymatic components (E1, E2 and E3). In the nucleus, the 2-oxoglutarate dehydrogenase complex associates with KAT2A. Interacts with ABHD11; this interaction maintains the functional lipoylation of the 2-oxoglutarate dehydrogenase complex. (R)-lipoate serves as cofactor.

Its subcellular location is the mitochondrion matrix. The protein localises to the nucleus. The enzyme catalyses N(6)-[(R)-dihydrolipoyl]-L-lysyl-[protein] + succinyl-CoA = N(6)-[(R)-S(8)-succinyldihydrolipoyl]-L-lysyl-[protein] + CoA. It participates in amino-acid degradation; L-lysine degradation via saccharopine pathway; glutaryl-CoA from L-lysine: step 6/6. It functions in the pathway carbohydrate metabolism; tricarboxylic acid cycle. Functionally, dihydrolipoamide succinyltransferase (E2) component of the 2-oxoglutarate dehydrogenase complex. The 2-oxoglutarate dehydrogenase complex catalyzes the overall conversion of 2-oxoglutarate to succinyl-CoA and CO(2). The 2-oxoglutarate dehydrogenase complex is mainly active in the mitochondrion. A fraction of the 2-oxoglutarate dehydrogenase complex also localizes in the nucleus and is required for lysine succinylation of histones: associates with KAT2A on chromatin and provides succinyl-CoA to histone succinyltransferase KAT2A. The protein is Dihydrolipoyllysine-residue succinyltransferase component of 2-oxoglutarate dehydrogenase complex, mitochondrial of Mus musculus (Mouse).